The sequence spans 261 residues: Indole-3-glycerol phosphate synthase (261 aa).

The protein belongs to the TrpC family.

The catalysed reaction is 1-(2-carboxyphenylamino)-1-deoxy-D-ribulose 5-phosphate + H(+) = (1S,2R)-1-C-(indol-3-yl)glycerol 3-phosphate + CO2 + H2O. Its pathway is amino-acid biosynthesis; L-tryptophan biosynthesis; L-tryptophan from chorismate: step 4/5. The chain is Indole-3-glycerol phosphate synthase from Alkaliphilus metalliredigens (strain QYMF).